We begin with the raw amino-acid sequence, 347 residues long: Holliday junction branch migration complex subunit RuvB (347 aa).

The tract at residues Met1–Tyr185 is large ATPase domain (RuvB-L). ATP is bound by residues Leu24, Arg25, Gly66, Lys69, Thr70, Thr71, Glu132 to Phe134, Arg175, Tyr185, and Arg222. Thr70 provides a ligand contact to Mg(2+). Residues Asp186–Asp255 are small ATPAse domain (RuvB-S). The head domain (RuvB-H) stretch occupies residues Glu258–Leu347. DNA is bound by residues Arg313 and Arg318.

It belongs to the RuvB family. As to quaternary structure, homohexamer. Forms an RuvA(8)-RuvB(12)-Holliday junction (HJ) complex. HJ DNA is sandwiched between 2 RuvA tetramers; dsDNA enters through RuvA and exits via RuvB. An RuvB hexamer assembles on each DNA strand where it exits the tetramer. Each RuvB hexamer is contacted by two RuvA subunits (via domain III) on 2 adjacent RuvB subunits; this complex drives branch migration. In the full resolvosome a probable DNA-RuvA(4)-RuvB(12)-RuvC(2) complex forms which resolves the HJ.

The protein resides in the cytoplasm. The catalysed reaction is ATP + H2O = ADP + phosphate + H(+). In terms of biological role, the RuvA-RuvB-RuvC complex processes Holliday junction (HJ) DNA during genetic recombination and DNA repair, while the RuvA-RuvB complex plays an important role in the rescue of blocked DNA replication forks via replication fork reversal (RFR). RuvA specifically binds to HJ cruciform DNA, conferring on it an open structure. The RuvB hexamer acts as an ATP-dependent pump, pulling dsDNA into and through the RuvAB complex. RuvB forms 2 homohexamers on either side of HJ DNA bound by 1 or 2 RuvA tetramers; 4 subunits per hexamer contact DNA at a time. Coordinated motions by a converter formed by DNA-disengaged RuvB subunits stimulates ATP hydrolysis and nucleotide exchange. Immobilization of the converter enables RuvB to convert the ATP-contained energy into a lever motion, pulling 2 nucleotides of DNA out of the RuvA tetramer per ATP hydrolyzed, thus driving DNA branch migration. The RuvB motors rotate together with the DNA substrate, which together with the progressing nucleotide cycle form the mechanistic basis for DNA recombination by continuous HJ branch migration. Branch migration allows RuvC to scan DNA until it finds its consensus sequence, where it cleaves and resolves cruciform DNA. The protein is Holliday junction branch migration complex subunit RuvB of Leifsonia xyli subsp. xyli (strain CTCB07).